A 453-amino-acid chain; its full sequence is tRNA modification GTPase MnmE (453 aa).

R22, E79, and K119 together coordinate (6S)-5-formyl-5,6,7,8-tetrahydrofolate. A TrmE-type G domain is found at 215-376 (GMKVVIAGRP…LKQHLKSLMG (162 aa)). Residue N225 participates in K(+) binding. Residues 225–230 (NAGKSS), 244–250 (TEIAGTT), 269–272 (DTAG), and 334–337 (NKAD) contribute to the GTP site. S229 lines the Mg(2+) pocket. Residues T244, I246, and T249 each coordinate K(+). Position 250 (T250) interacts with Mg(2+). Residue K453 coordinates (6S)-5-formyl-5,6,7,8-tetrahydrofolate.

This sequence belongs to the TRAFAC class TrmE-Era-EngA-EngB-Septin-like GTPase superfamily. TrmE GTPase family. Homodimer. Heterotetramer of two MnmE and two MnmG subunits. Requires K(+) as cofactor.

The protein localises to the cytoplasm. Its function is as follows. Exhibits a very high intrinsic GTPase hydrolysis rate. Involved in the addition of a carboxymethylaminomethyl (cmnm) group at the wobble position (U34) of certain tRNAs, forming tRNA-cmnm(5)s(2)U34. This chain is tRNA modification GTPase MnmE, found in Shewanella denitrificans (strain OS217 / ATCC BAA-1090 / DSM 15013).